We begin with the raw amino-acid sequence, 596 residues long: Transketolase-like protein 1 (596 aa).

Residue His-46 coordinates substrate. Residues Ser-49 and 94–96 (GWL) each bind thiamine diphosphate. Asp-126 is a binding site for Mg(2+). 2 residues coordinate thiamine diphosphate: Val-127 and Asn-156. 2 residues coordinate Mg(2+): Asn-156 and Leu-158. Lys-218 and His-232 together coordinate thiamine diphosphate. Residues His-232, Arg-292, and Ser-319 each coordinate substrate. The thiamine diphosphate site is built by Glu-340 and Phe-366. Glu-340 functions as the Proton donor in the catalytic mechanism. Residues His-390 and Asp-398 each contribute to the substrate site. Gln-402 serves as a coordination point for thiamine diphosphate. Position 448 (Arg-448) interacts with substrate.

This sequence belongs to the transketolase family. Homodimer. Mg(2+) is required as a cofactor. Ca(2+) serves as cofactor. It depends on Mn(2+) as a cofactor. The cofactor is Co(2+). Requires thiamine diphosphate as cofactor.

The protein localises to the cytoplasm. It catalyses the reaction D-sedoheptulose 7-phosphate + D-glyceraldehyde 3-phosphate = aldehydo-D-ribose 5-phosphate + D-xylulose 5-phosphate. Its function is as follows. Catalyzes the transfer of a two-carbon ketol group from a ketose donor to an aldose acceptor, via a covalent intermediate with the cofactor thiamine pyrophosphate. This is Transketolase-like protein 1 (TKTL1) from Bos taurus (Bovine).